The sequence spans 152 residues: Xanthine-guanine phosphoribosyltransferase (152 aa).

5-phospho-alpha-D-ribose 1-diphosphate is bound by residues 37–38 (RG), R69, and 88–96 (DDLVDTGGT). R69 contacts GMP. D89 lines the Mg(2+) pocket. 2 residues coordinate guanine: D92 and I135. Residues D92 and I135 each contribute to the xanthine site. Residues 92–96 (DTGGT) and 134–135 (WI) contribute to the GMP site.

Belongs to the purine/pyrimidine phosphoribosyltransferase family. XGPT subfamily. Homotetramer. It depends on Mg(2+) as a cofactor.

Its subcellular location is the cell inner membrane. The enzyme catalyses GMP + diphosphate = guanine + 5-phospho-alpha-D-ribose 1-diphosphate. The catalysed reaction is XMP + diphosphate = xanthine + 5-phospho-alpha-D-ribose 1-diphosphate. It catalyses the reaction IMP + diphosphate = hypoxanthine + 5-phospho-alpha-D-ribose 1-diphosphate. The protein operates within purine metabolism; GMP biosynthesis via salvage pathway; GMP from guanine: step 1/1. Its pathway is purine metabolism; XMP biosynthesis via salvage pathway; XMP from xanthine: step 1/1. In terms of biological role, purine salvage pathway enzyme that catalyzes the transfer of the ribosyl-5-phosphate group from 5-phospho-alpha-D-ribose 1-diphosphate (PRPP) to the N9 position of the 6-oxopurines guanine and xanthine to form the corresponding ribonucleotides GMP (guanosine 5'-monophosphate) and XMP (xanthosine 5'-monophosphate), with the release of PPi. To a lesser extent, also acts on hypoxanthine. The protein is Xanthine-guanine phosphoribosyltransferase of Pectobacterium carotovorum subsp. carotovorum (strain PC1).